Consider the following 732-residue polypeptide: Cullin-3B (732 aa).

A Cullin neddylation domain is found at 662–724 (DRKPQIEAAI…RDFLERDNTD (63 aa)). Residue K676 forms a Glycyl lysine isopeptide (Lys-Gly) (interchain with G-Cter in NEDD8) linkage.

Belongs to the cullin family. Interacts with BTB/POZ-MATH proteins BPM1 and BPM3. Neddylated. Deneddylated via its interaction with the COP9 signalosome (CSN) complex.

Its pathway is protein modification; protein ubiquitination. In terms of biological role, component of the cullin-RING ubiquitin ligases (CRL), or CUL3-RBX1-BTB protein E3 ligase complexes which mediate the ubiquitination and subsequent proteasomal degradation of target proteins. The functional specificity of the CRL complex depends on the BTB domain-containing protein as the substrate recognition component. Involved in embryo pattern formation and endosperm development. Required for the normal division and organization of the root stem cells and columella root cap cells. Regulates primary root growth by an unknown pathway, but in an ethylene-dependent manner. Functions in distal root patterning, by an ethylene-independent mechanism. Functionally redundant with CUL3A. The chain is Cullin-3B (CUL3B) from Arabidopsis thaliana (Mouse-ear cress).